Here is a 246-residue protein sequence, read N- to C-terminus: Uroporphyrinogen-III synthase (246 aa).

The protein belongs to the uroporphyrinogen-III synthase family. In terms of assembly, monomer.

The catalysed reaction is hydroxymethylbilane = uroporphyrinogen III + H2O. Its pathway is porphyrin-containing compound metabolism; protoporphyrin-IX biosynthesis; coproporphyrinogen-III from 5-aminolevulinate: step 3/4. Its function is as follows. Catalyzes cyclization of the linear tetrapyrrole, hydroxymethylbilane, to the macrocyclic uroporphyrinogen III. In Salmonella typhimurium (strain LT2 / SGSC1412 / ATCC 700720), this protein is Uroporphyrinogen-III synthase (hemD).